The chain runs to 556 residues: Urocanate hydratase (556 aa).

Residues 52–53 (GG), Gln130, 176–178 (GMG), Glu196, Arg201, 242–243 (NA), 263–267 (QTSAH), 273–274 (YL), and Tyr322 each bind NAD(+). Cys410 is a catalytic residue. Gly492 provides a ligand contact to NAD(+).

Belongs to the urocanase family. It depends on NAD(+) as a cofactor.

It is found in the cytoplasm. The catalysed reaction is 4-imidazolone-5-propanoate = trans-urocanate + H2O. The protein operates within amino-acid degradation; L-histidine degradation into L-glutamate; N-formimidoyl-L-glutamate from L-histidine: step 2/3. Catalyzes the conversion of urocanate to 4-imidazolone-5-propionate. This Bradyrhizobium sp. (strain ORS 278) protein is Urocanate hydratase.